The sequence spans 111 residues: Pyrimidine/purine nucleoside phosphorylase 1 (111 aa).

It belongs to the nucleoside phosphorylase PpnP family.

The enzyme catalyses a purine D-ribonucleoside + phosphate = a purine nucleobase + alpha-D-ribose 1-phosphate. The catalysed reaction is adenosine + phosphate = alpha-D-ribose 1-phosphate + adenine. It catalyses the reaction cytidine + phosphate = cytosine + alpha-D-ribose 1-phosphate. It carries out the reaction guanosine + phosphate = alpha-D-ribose 1-phosphate + guanine. The enzyme catalyses inosine + phosphate = alpha-D-ribose 1-phosphate + hypoxanthine. The catalysed reaction is thymidine + phosphate = 2-deoxy-alpha-D-ribose 1-phosphate + thymine. It catalyses the reaction uridine + phosphate = alpha-D-ribose 1-phosphate + uracil. It carries out the reaction xanthosine + phosphate = alpha-D-ribose 1-phosphate + xanthine. Its function is as follows. Catalyzes the phosphorolysis of diverse nucleosides, yielding D-ribose 1-phosphate and the respective free bases. Can use uridine, adenosine, guanosine, cytidine, thymidine, inosine and xanthosine as substrates. Also catalyzes the reverse reactions. This chain is Pyrimidine/purine nucleoside phosphorylase 1, found in Psychrobacter cryohalolentis (strain ATCC BAA-1226 / DSM 17306 / VKM B-2378 / K5).